Here is an 882-residue protein sequence, read N- to C-terminus: Alanine--tRNA ligase (882 aa).

The Zn(2+) site is built by His-570, His-574, Cys-672, and His-676.

It belongs to the class-II aminoacyl-tRNA synthetase family. The cofactor is Zn(2+).

Its subcellular location is the cytoplasm. The enzyme catalyses tRNA(Ala) + L-alanine + ATP = L-alanyl-tRNA(Ala) + AMP + diphosphate. Catalyzes the attachment of alanine to tRNA(Ala) in a two-step reaction: alanine is first activated by ATP to form Ala-AMP and then transferred to the acceptor end of tRNA(Ala). Also edits incorrectly charged Ser-tRNA(Ala) and Gly-tRNA(Ala) via its editing domain. The protein is Alanine--tRNA ligase of Xanthomonas campestris pv. campestris (strain 8004).